The following is a 458-amino-acid chain: ATP synthase subunit beta (458 aa).

148–155 (GGAGVGKT) contacts ATP.

This sequence belongs to the ATPase alpha/beta chains family. As to quaternary structure, F-type ATPases have 2 components, CF(1) - the catalytic core - and CF(0) - the membrane proton channel. CF(1) has five subunits: alpha(3), beta(3), gamma(1), delta(1), epsilon(1). CF(0) has three main subunits: a(1), b(2) and c(9-12). The alpha and beta chains form an alternating ring which encloses part of the gamma chain. CF(1) is attached to CF(0) by a central stalk formed by the gamma and epsilon chains, while a peripheral stalk is formed by the delta and b chains.

The protein localises to the cell inner membrane. The enzyme catalyses ATP + H2O + 4 H(+)(in) = ADP + phosphate + 5 H(+)(out). Produces ATP from ADP in the presence of a proton gradient across the membrane. The catalytic sites are hosted primarily by the beta subunits. The protein is ATP synthase subunit beta of Actinobacillus succinogenes (strain ATCC 55618 / DSM 22257 / CCUG 43843 / 130Z).